Reading from the N-terminus, the 644-residue chain is Fructose-1,6-bisphosphatase class 3 (644 aa).

The protein belongs to the FBPase class 3 family. It depends on Mn(2+) as a cofactor.

The catalysed reaction is beta-D-fructose 1,6-bisphosphate + H2O = beta-D-fructose 6-phosphate + phosphate. It participates in carbohydrate biosynthesis; gluconeogenesis. This is Fructose-1,6-bisphosphatase class 3 from Oceanobacillus iheyensis (strain DSM 14371 / CIP 107618 / JCM 11309 / KCTC 3954 / HTE831).